Here is a 104-residue protein sequence, read N- to C-terminus: Secreted RxLR effector protein 54 (104 aa).

The N-terminal stretch at 1–19 is a signal peptide; the sequence is MIFTLLGLALVATKSACIA. Residues 52-55 carry the RxLR motif; the sequence is RSLR. A glycan (N-linked (GlcNAc...) asparagine) is linked at asparagine 64.

The protein belongs to the RxLR effector family.

It localises to the secreted. The protein localises to the host chloroplast envelope. It is found in the host mitochondrion. Its subcellular location is the host nucleus. The protein resides in the host cytoplasm. Functionally, secreted effector that completely suppresses the host cell death induced by cell death-inducing proteins. This chain is Secreted RxLR effector protein 54, found in Plasmopara viticola (Downy mildew of grapevine).